A 258-amino-acid chain; its full sequence is Deoxyribose-phosphate aldolase (258 aa).

Residue Asp102 is the Proton donor/acceptor of the active site. The Schiff-base intermediate with acetaldehyde role is filled by Lys165. Lys199 serves as the catalytic Proton donor/acceptor.

Belongs to the DeoC/FbaB aldolase family. DeoC type 2 subfamily.

The protein localises to the cytoplasm. The catalysed reaction is 2-deoxy-D-ribose 5-phosphate = D-glyceraldehyde 3-phosphate + acetaldehyde. Its pathway is carbohydrate degradation; 2-deoxy-D-ribose 1-phosphate degradation; D-glyceraldehyde 3-phosphate and acetaldehyde from 2-deoxy-alpha-D-ribose 1-phosphate: step 2/2. Catalyzes a reversible aldol reaction between acetaldehyde and D-glyceraldehyde 3-phosphate to generate 2-deoxy-D-ribose 5-phosphate. The polypeptide is Deoxyribose-phosphate aldolase (Vibrio campbellii (strain ATCC BAA-1116)).